A 108-amino-acid polypeptide reads, in one-letter code: ATP synthase peripheral stalk subunit F6, mitochondrial (108 aa).

Residues 1-32 (MTVQRIFRLSSVLRSAVSVHLRRNIGVTAVAF) constitute a mitochondrion transit peptide. Lys41, Lys46, and Lys79 each carry N6-acetyllysine. N6-acetyllysine; alternate occurs at positions 84 and 99. Lys84 and Lys99 each carry N6-succinyllysine; alternate. Lys105 bears the N6-acetyllysine mark. A Phosphoserine modification is found at Ser108.

It belongs to the eukaryotic ATPase subunit F6 family. Component of the ATP synthase complex composed at least of ATP5F1A/subunit alpha, ATP5F1B/subunit beta, ATP5MC1/subunit c (homooctomer), MT-ATP6/subunit a, MT-ATP8/subunit 8, ATP5ME/subunit e, ATP5MF/subunit f, ATP5MG/subunit g, ATP5MK/subunit k, ATP5MJ/subunit j, ATP5F1C/subunit gamma, ATP5F1D/subunit delta, ATP5F1E/subunit epsilon, ATP5PF/subunit F6, ATP5PB/subunit b, ATP5PD/subunit d, ATP5PO/subunit OSCP. ATP synthase complex consists of a soluble F(1) head domain (subunits alpha(3) and beta(3)) - the catalytic core - and a membrane F(0) domain - the membrane proton channel (subunits c, a, 8, e, f, g, k and j). These two domains are linked by a central stalk (subunits gamma, delta, and epsilon) rotating inside the F1 region and a stationary peripheral stalk (subunits F6, b, d, and OSCP).

The protein localises to the mitochondrion. It localises to the mitochondrion inner membrane. Functionally, subunit F6, of the mitochondrial membrane ATP synthase complex (F(1)F(0) ATP synthase or Complex V) that produces ATP from ADP in the presence of a proton gradient across the membrane which is generated by electron transport complexes of the respiratory chain. ATP synthase complex consist of a soluble F(1) head domain - the catalytic core - and a membrane F(1) domain - the membrane proton channel. These two domains are linked by a central stalk rotating inside the F(1) region and a stationary peripheral stalk. During catalysis, ATP synthesis in the catalytic domain of F(1) is coupled via a rotary mechanism of the central stalk subunits to proton translocation. In vivo, can only synthesize ATP although its ATP hydrolase activity can be activated artificially in vitro. Part of the complex F(0) domain. Part of the complex F(0) domain and the peripheric stalk, which acts as a stator to hold the catalytic alpha(3)beta(3) subcomplex and subunit a/ATP6 static relative to the rotary elements. This chain is ATP synthase peripheral stalk subunit F6, mitochondrial, found in Rattus norvegicus (Rat).